We begin with the raw amino-acid sequence, 544 residues long: Chaperonin GroEL 1 (544 aa).

Residues 29–32 (TLGP), lysine 50, 86–90 (DGTTT), glycine 414, and aspartate 494 each bind ATP.

It belongs to the chaperonin (HSP60) family. As to quaternary structure, forms a cylinder of 14 subunits composed of two heptameric rings stacked back-to-back. Interacts with the co-chaperonin GroES.

The protein localises to the cytoplasm. The catalysed reaction is ATP + H2O + a folded polypeptide = ADP + phosphate + an unfolded polypeptide.. Together with its co-chaperonin GroES, plays an essential role in assisting protein folding. The GroEL-GroES system forms a nano-cage that allows encapsulation of the non-native substrate proteins and provides a physical environment optimized to promote and accelerate protein folding. The sequence is that of Chaperonin GroEL 1 from Psychromonas ingrahamii (strain DSM 17664 / CCUG 51855 / 37).